The following is a 281-amino-acid chain: Glutamate racemase (281 aa).

Residues 13-14 and 45-46 contribute to the substrate site; these read DS and YG. C76 serves as the catalytic Proton donor/acceptor. Substrate is bound at residue 77 to 78; the sequence is NT. Residue C185 is the Proton donor/acceptor of the active site. 186–187 provides a ligand contact to substrate; it reads TH.

The protein belongs to the aspartate/glutamate racemases family.

The enzyme catalyses L-glutamate = D-glutamate. The protein operates within cell wall biogenesis; peptidoglycan biosynthesis. Provides the (R)-glutamate required for cell wall biosynthesis. This Rippkaea orientalis (strain PCC 8801 / RF-1) (Cyanothece sp. (strain PCC 8801)) protein is Glutamate racemase.